The chain runs to 324 residues: Phospho-N-acetylmuramoyl-pentapeptide-transferase (324 aa).

A run of 10 helical transmembrane segments spans residues 5–25 (VILF…PILI), 50–70 (GTPT…TIVM), 77–97 (ISPE…LGFL), 117–137 (LIGQ…YNFA), 147–167 (LSFD…VGGS), 176–196 (LDGL…ILAW), 203–223 (VAIF…FNAH), 227–247 (VFMG…IAIL), 250–270 (LEIL…SVIL), and 302–322 (VVVT…YIEV).

Belongs to the glycosyltransferase 4 family. MraY subfamily. It depends on Mg(2+) as a cofactor.

It localises to the cell membrane. The catalysed reaction is UDP-N-acetyl-alpha-D-muramoyl-L-alanyl-gamma-D-glutamyl-meso-2,6-diaminopimeloyl-D-alanyl-D-alanine + di-trans,octa-cis-undecaprenyl phosphate = di-trans,octa-cis-undecaprenyl diphospho-N-acetyl-alpha-D-muramoyl-L-alanyl-D-glutamyl-meso-2,6-diaminopimeloyl-D-alanyl-D-alanine + UMP. It participates in cell wall biogenesis; peptidoglycan biosynthesis. Functionally, catalyzes the initial step of the lipid cycle reactions in the biosynthesis of the cell wall peptidoglycan: transfers peptidoglycan precursor phospho-MurNAc-pentapeptide from UDP-MurNAc-pentapeptide onto the lipid carrier undecaprenyl phosphate, yielding undecaprenyl-pyrophosphoryl-MurNAc-pentapeptide, known as lipid I. This chain is Phospho-N-acetylmuramoyl-pentapeptide-transferase, found in Bacillus subtilis (strain 168).